The primary structure comprises 576 residues: MEARGKVVGVIGNLVTIEIVGTVSMNEIVFIKTGGRSLKAEIIRIRDGEVDAQVFEMTKGIAVGDDIEFTDKLLTVELGPGLLSQVYDGLQNPLSELAAQCGFFLERGLYLSALDRSKKWSFNATAKVGDIVVAGDYLGFVVEGTIKHKIMVPFYRKDSYKIVEIVSDGNYTVDDKIAVIENDAGGRHVITMSFHWPVKVPITSYKDRLIPSEPMVTQTRIIDTFFPVAKGGTFCIPGPFGAGKTVLQQVTSRNADVDVVIIAACGERAGEVVETLKEFPELIDPRTGKSLMDRTCIICNTSSMPVAAREASVYTAITIGEYYRQMGLDILLLADSTSRWAQAMREMSGRLEEIPGEEAFPAYLESVIASFYERAGIVVLNDGNVGSVTVGGSVSPAGGNFEEPVTQATLKVVGAFHGLTRERSDARKFPAINPLESWSKYRGVVESEKTGYARSFLAKGNEINQMMKVVGEEGISIGDFLVYLKSELLDACYLQQNSFDSVDTAVSPERQNYMFDILYDILQSDFKFENKLEARSFVNELRQNILDMNLNPFKEEKFNKLENTLKDLVRSKKLDF.

238–245 (GPFGAGKT) is an ATP binding site.

It belongs to the ATPase alpha/beta chains family.

It carries out the reaction ATP + H2O + 4 H(+)(in) = ADP + phosphate + 5 H(+)(out). Functionally, produces ATP from ADP in the presence of a proton gradient across the membrane. The V-type alpha chain is a catalytic subunit. This Borrelia turicatae (strain 91E135) protein is V-type ATP synthase alpha chain.